We begin with the raw amino-acid sequence, 342 residues long: UDP-3-O-acylglucosamine N-acyltransferase (342 aa).

The active-site Proton acceptor is His243.

Belongs to the transferase hexapeptide repeat family. LpxD subfamily. Homotrimer.

The catalysed reaction is a UDP-3-O-[(3R)-3-hydroxyacyl]-alpha-D-glucosamine + a (3R)-hydroxyacyl-[ACP] = a UDP-2-N,3-O-bis[(3R)-3-hydroxyacyl]-alpha-D-glucosamine + holo-[ACP] + H(+). It functions in the pathway bacterial outer membrane biogenesis; LPS lipid A biosynthesis. Its function is as follows. Catalyzes the N-acylation of UDP-3-O-acylglucosamine using 3-hydroxyacyl-ACP as the acyl donor. Is involved in the biosynthesis of lipid A, a phosphorylated glycolipid that anchors the lipopolysaccharide to the outer membrane of the cell. The chain is UDP-3-O-acylglucosamine N-acyltransferase from Coxiella burnetii (strain CbuK_Q154) (Coxiella burnetii (strain Q154)).